The chain runs to 605 residues: Elongation factor 4 (605 aa).

Residues 9–191 (DTIRNFCIIA…AIIKRVPAPV (183 aa)) form the tr-type G domain. Residues 21–26 (DHGKST) and 138–141 (NKID) each bind GTP.

Belongs to the TRAFAC class translation factor GTPase superfamily. Classic translation factor GTPase family. LepA subfamily.

It is found in the cell inner membrane. It carries out the reaction GTP + H2O = GDP + phosphate + H(+). In terms of biological role, required for accurate and efficient protein synthesis under certain stress conditions. May act as a fidelity factor of the translation reaction, by catalyzing a one-codon backward translocation of tRNAs on improperly translocated ribosomes. Back-translocation proceeds from a post-translocation (POST) complex to a pre-translocation (PRE) complex, thus giving elongation factor G a second chance to translocate the tRNAs correctly. Binds to ribosomes in a GTP-dependent manner. In Chlorobium phaeobacteroides (strain BS1), this protein is Elongation factor 4.